Reading from the N-terminus, the 893-residue chain is DNA mismatch repair protein MutS (893 aa).

Low complexity predominate over residues 1-17 (MESTMSSASTNASPPSA). Residues 1–22 (MESTMSSASTNASPPSASEKHT) are disordered. Residue 641–648 (GPNMGGKS) participates in ATP binding.

Belongs to the DNA mismatch repair MutS family.

This protein is involved in the repair of mismatches in DNA. It is possible that it carries out the mismatch recognition step. This protein has a weak ATPase activity. The sequence is that of DNA mismatch repair protein MutS from Herminiimonas arsenicoxydans.